The chain runs to 344 residues: MDLKGKKVTLHDMSLRDGMHAKQHQISLDEMVSIATGLDQAGIPLIEVTHGDGLGGSSLNYGFPAHTDEEYLSAVVPKMTQAKVSALLIPGIGTVDHLKMAYDHGVSTIRVATHCTEADVSEQHISAARKMGLDTVGFLMMAHMISPEELLAQAKLMESYGANCIYCTDSAGYMLPDDVSTRIALLRSELNSETEIGFHGHHNLGMSIPNSLAAIEMGANRIDGSVAGLGAGAGNTPLEVFTAVLDRMAVNHGIDLYKIMDVAEDLVMPMMDQPIRIDRNSLTLGYAGVYSSFLLFAERAEKKYGVPARDILLELGRLKTVGGQEDMIDDTAMTMAKALKAAKA.

Residues 8 to 260 (VTLHDMSLRD…NHGIDLYKIM (253 aa)) enclose the Pyruvate carboxyltransferase domain. 16–17 (RD) is a substrate binding site. Asp-17 is a Mn(2+) binding site. His-20 acts as the Proton acceptor in catalysis. Positions 170 and 199 each coordinate substrate. Residues His-199 and His-201 each contribute to the Mn(2+) site. Tyr-290 contributes to the substrate binding site.

It belongs to the 4-hydroxy-2-oxovalerate aldolase family.

It carries out the reaction (S)-4-hydroxy-2-oxopentanoate = acetaldehyde + pyruvate. The polypeptide is 4-hydroxy-2-oxovalerate aldolase (mhpE) (Pseudoalteromonas translucida (strain TAC 125)).